Reading from the N-terminus, the 682-residue chain is Polycomb protein suz12-B (682 aa).

The segment at 326–355 is disordered; it reads DPSDPSTAPVAKPLSTRNSDTSTTESRIST. Residues 340–354 show a composition bias toward polar residues; it reads STRNSDTSTTESRIS. A C2H2-type zinc finger spans residues 408–431; the sequence is LHCPWCTLNCRKLYSLLKHLKLSH. The interval 523-599 is VEFS-box; sequence RLYFHSDSCM…NQMSQASMLF (77 aa).

The protein belongs to the VEFS (VRN2-EMF2-FIS2-SU(Z)12) family. In terms of assembly, component of the prc2/eed-ezh2 complex.

It localises to the nucleus. Its function is as follows. Polycomb group (PcG) protein. Component of the prc2/eed-ezh2 complex, which methylates 'Lys-9' and 'Lys-27' of histone H3, leading to transcriptional repression of the affected target gene. The sequence is that of Polycomb protein suz12-B (suz12b) from Danio rerio (Zebrafish).